The sequence spans 631 residues: MSAEVRLRQLQQLVLDPGFLGLEPLLDLLLGVHQELGASHLAQDKYVADFLQWVEPIAARLKEVRLQRDDFEILKVIGRGAFSEVAVVKMKQTGQVYAMKIMNKWDMLKRGEVSCFREERDVLVKGDRRWITQLHFAFQDENYLYLVMEYYVGGDLLTLLSKFGERIPAEMARFYLAEIVMAIDSVHRLGYVHRDIKPDNILLDRCGHIRLADFGSCLKLQPDGMVRSLVAVGTPDYLSPEILQAVGGGPGAGSYGPECDWWALGVFAYEMFYGQTPFYADSTAETYAKIVHYREHLSLPLADTVVPEEAQDLIRGLLCPAEIRLGRGGAGDFQKHPFFFGLDWEGLRDSVPPFTPDFEGATDTCNFDVVEDRLTAMVSGGGETLSDMQEDMPLGVRLPFVGYSYCCMAFRDNQVPDPTPMELEALQLPVSDLQGLDLQPPVSPPDQVAEEADLVAVPAPVAEAETTVTLQQLQEALEEEVLTRQSLSRELEAIRTANQNFSSQLQEAEVRNRDLEAHVRQLQERMEMLQAPGAAAITGVPSPRATDPPSHLDGPPAVAVGQCPLVGPGPMHRRHLLLPARIPRPGLSEARCLLLFAAALAAAATLGCTGLVAYTGGLTPVWCFPGATFAP.

Residues 1-592 are Cytoplasmic-facing; it reads MSAEVRLRQL…PRPGLSEARC (592 aa). In terms of domain architecture, Protein kinase spans 71–339; sequence FEILKVIGRG…AGDFQKHPFF (269 aa). Residues 77–85 and Lys100 each bind ATP; that span reads IGRGAFSEV. The active-site Proton acceptor is the Asp195. 2 positions are modified to phosphoserine; by autocatalysis: Ser216 and Ser228. Position 234 is a phosphothreonine; by autocatalysis (Thr234). The AGC-kinase C-terminal domain occupies 340 to 415; it reads FGLDWEGLRD…CCMAFRDNQV (76 aa). Residues 464–532 are a coiled coil; it reads AETTVTLQQL…QERMEMLQAP (69 aa). A helical; Anchor for type IV membrane protein transmembrane segment spans residues 593–613; that stretch reads LLLFAAALAAAATLGCTGLVA. At 614–631 the chain is on the lumenal side; that stretch reads YTGGLTPVWCFPGATFAP.

Belongs to the protein kinase superfamily. AGC Ser/Thr protein kinase family. DMPK subfamily. Homodimer; homodimerization stimulates the kinase activity. Interacts with HSPB2; may enhance DMPK kinase activity. Interacts with PLN; phosphorylates PLN. May interact with RAC1; may regulate DMPK kinase activity. Interacts with LMNA; may regulate nuclear envelope stability. Mg(2+) is required as a cofactor. Post-translationally, phosphorylated. Autophosphorylates. Phosphorylation by RAF1 may result in activation of DMPK. Proteolytic processing of the C-terminus may remove the transmembrane domain and release the kinase from membranes stimulating its activity. Expressed in all tissues tested, with a predominance in brain, skeletal muscle, heart, and other tissues containing smooth muscle. In the heart, expression is restricted to the cardiomyocytes in the ventricle and atrium.

The protein localises to the sarcoplasmic reticulum membrane. Its subcellular location is the cell membrane. It localises to the endoplasmic reticulum membrane. The protein resides in the nucleus outer membrane. It is found in the mitochondrion outer membrane. The protein localises to the cytoplasm. Its subcellular location is the cytosol. The catalysed reaction is L-seryl-[protein] + ATP = O-phospho-L-seryl-[protein] + ADP + H(+). It catalyses the reaction L-threonyl-[protein] + ATP = O-phospho-L-threonyl-[protein] + ADP + H(+). Coiled-coil-mediated oligomerization enhances the catalytic activity. Proteolytic processing of the C-terminus may release the protein from membranes and constitute a mean to regulate the enzyme. May be regulated by HSPB2, RAC1, RAF1 and G-protein second messengers. Functionally, non-receptor serine/threonine protein kinase which is necessary for the maintenance of skeletal muscle structure and function. May play a role in myocyte differentiation and survival by regulating the integrity of the nuclear envelope and the expression of muscle-specific genes. May also phosphorylate PPP1R12A and inhibit the myosin phosphatase activity to regulate myosin phosphorylation. Also critical to the modulation of cardiac contractility and to the maintenance of proper cardiac conduction activity probably through the regulation of cellular calcium homeostasis. Phosphorylates PLN, a regulator of calcium pumps and may regulate sarcoplasmic reticulum calcium uptake in myocytes. May also phosphorylate FXYD1/PLM which is able to induce chloride currents. May also play a role in synaptic plasticity. The sequence is that of Myotonin-protein kinase (Dmpk) from Mus musculus (Mouse).